We begin with the raw amino-acid sequence, 308 residues long: Autophagy-related protein 3 (308 aa).

The segment at 83–159 is flexible region; the sequence is NFVETQTTET…NELADDDDDI (77 aa). Positions 89–121 are disordered; the sequence is TTETRDVGDGWELEGQSEGERESGREDTKSNEE. Basic and acidic residues predominate over residues 106-120; the sequence is EGERESGREDTKSNE. The Glycyl thioester intermediate role is filled by Cys235. Residues 239–283 form a handle region region; it reads NVMKVLMEKVRASRHRARDTEAQKNAEEDWEDLQSDIDDGLRVDQ.

This sequence belongs to the ATG3 family. Monomer. Interacts with ATG8 through an intermediate thioester bond between Cys-235 and the C-terminal Gly of ATG8. Interacts with the C-terminal region of the E1-like ATG7 enzyme. Also interacts with the ATG12-ATG5 conjugate.

It localises to the cytoplasm. Functionally, E2 conjugating enzyme required for the cytoplasm to vacuole transport (Cvt) and autophagy. Required for selective autophagic degradation of the nucleus (nucleophagy) as well as for mitophagy which contributes to regulate mitochondrial quantity and quality by eliminating the mitochondria to a basal level to fulfill cellular energy requirements and preventing excess ROS production. Responsible for the E2-like covalent binding of phosphatidylethanolamine to the C-terminal Gly of ATG8. The ATG12-ATG5 conjugate plays a role of an E3 and promotes the transfer of ATG8 from ATG3 to phosphatidylethanolamine (PE). This step is required for the membrane association of ATG8. The formation of the ATG8-phosphatidylethanolamine conjugate is essential for autophagy and for the cytoplasm to vacuole transport (Cvt). The ATG8-PE conjugate mediates tethering between adjacent membranes and stimulates membrane hemifusion, leading to expansion of the autophagosomal membrane during autophagy. This Kluyveromyces marxianus (strain DMKU3-1042 / BCC 29191 / NBRC 104275) (Yeast) protein is Autophagy-related protein 3.